Reading from the N-terminus, the 644-residue chain is Chaperone protein HtpG (644 aa).

An a; substrate-binding region spans residues 1–352; sequence MNARVEQLEF…AQDMSLNVSR (352 aa). Positions 353 to 566 are b; that stretch reads EILQQDRQIK…AFGITPALAR (214 aa). The interval 567–644 is c; the sequence is LYRASGQDIP…ILADRLARTL (78 aa).

The protein belongs to the heat shock protein 90 family. Homodimer.

The protein localises to the cytoplasm. Its function is as follows. Molecular chaperone. Has ATPase activity. The protein is Chaperone protein HtpG of Mycobacterium avium (strain 104).